The primary structure comprises 158 residues: Ankyrin repeat domain-containing protein 37 (158 aa).

ANK repeat units follow at residues 1 to 25, 30 to 59, and 63 to 92; these read MLLL…SVNA, CKQS…DLNQ, and LGEA…QIDL. Positions 129–149 match the Nuclear localization signal motif; sequence EHPDRNDCVAVLRQKRSLGSV.

In terms of processing, ubiquitinated by the CRL2(FEM1B) complex, leading to its degradation. As to expression, mainly expressed in testis, small intestine, colon, blood leukocytes and in pancreatic adenocarcinoma cells.

The protein localises to the nucleus. It is found in the cytoplasm. The protein is Ankyrin repeat domain-containing protein 37 of Homo sapiens (Human).